Consider the following 496-residue polypeptide: Zinc finger and SCAN domain-containing protein 5C (496 aa).

Over residues 1–19 the composition is skewed to polar residues; the sequence is MAANCTSSWSLGESCNSPG. Residues 1-38 form a disordered region; it reads MAANCTSSWSLGESCNSPGSEPPQSMPSPATQLGNHDS. Residues 44–126 form the SCAN box domain; it reads HVNFRMFSCP…DLLRNNRRPK (83 aa). Disordered regions lie at residues 149-188 and 203-347; these read EAPASVRDDPRHVSSQRTSSVNQMCPEEGQASQELQTLPR and PETT…HPSG. The segment covering 161 to 171 has biased composition (polar residues); that stretch reads VSSQRTSSVNQ. Basic and acidic residues predominate over residues 210–223; the sequence is GDPKALRPKPTLEK. A compositionally biased stretch (polar residues) spans 234-247; it reads GLTSPEPQLPNSPT. Residues 253–263 show a composition bias toward basic and acidic residues; sequence KEGKEPQKRAS. 5 consecutive C2H2-type zinc fingers follow at residues 356–378, 384–406, 412–434, 440–462, and 468–490; these read FACEVCGKRFKYRGKLAVHTRSH, FQCNLCGKRFMQRIGLQFHQRTH, YTCDICQKQFTQKSYLKCHKRSH, FECKDCKKVFTYKANLKEHQRIH, and HKCSKCPRAFGRPATLRRHQKTH.

The protein resides in the nucleus. Functionally, may be involved in transcriptional regulation. This Homo sapiens (Human) protein is Zinc finger and SCAN domain-containing protein 5C.